The sequence spans 442 residues: D-serine dehydratase (442 aa).

K118 bears the N6-(pyridoxal phosphate)lysine mark.

This sequence belongs to the serine/threonine dehydratase family. DsdA subfamily. As to quaternary structure, monomer. The cofactor is pyridoxal 5'-phosphate.

The catalysed reaction is D-serine = pyruvate + NH4(+). The chain is D-serine dehydratase from Shigella flexneri.